The chain runs to 320 residues: Cytochrome c biogenesis protein CcsA (320 aa).

8 consecutive transmembrane segments (helical) span residues 9 to 29 (ILAH…WGTL), 36 to 56 (LSSS…GLLI), 70 to 90 (LYES…LLEV), 97 to 117 (WLGA…TLGL), 143 to 163 (ILFS…LLVI), 227 to 247 (AIGL…IWAN), 254 to 274 (WSWD…AIYL), and 288 to 308 (AIVA…VNLL).

This sequence belongs to the CcmF/CycK/Ccl1/NrfE/CcsA family. May interact with Ccs1.

The protein localises to the plastid. It localises to the chloroplast thylakoid membrane. Functionally, required during biogenesis of c-type cytochromes (cytochrome c6 and cytochrome f) at the step of heme attachment. This Pinus thunbergii (Japanese black pine) protein is Cytochrome c biogenesis protein CcsA.